Here is a 260-residue protein sequence, read N- to C-terminus: Uroplakin-1b (260 aa).

The Cytoplasmic segment spans residues 1 to 15 (MAKDDSTVRCFQGLL). A helical membrane pass occupies residues 16–36 (IFGHVIVGMCGIALTAECIFF). Residues 37 to 59 (VSDQHSLYPLLEATNNDDIFGAA) are Extracellular-facing. The helical transmembrane segment at 60 to 80 (WIGMFVGICLFCLSVLAIVGI) threads the bilayer. The Cytoplasmic portion of the chain corresponds to 81 to 86 (MKSNRK). Residues 87-107 (ILLAYFIMMFIVYGFEVASCI) traverse the membrane as a helical segment. Topologically, residues 108-229 (TAATQRDFFT…ELISGPMDRH (122 aa)) are extracellular. A helical membrane pass occupies residues 230-250 (AWGVAWFGFAILCWTFWVLLG). Over 251 to 260 (TMFYWSRIEY) the chain is Cytoplasmic.

This sequence belongs to the tetraspanin (TM4SF) family. Heterodimer with uroplakin-3A (UPK3A) or uroplakin-3B (UPK3B). N-glycosylated with high-mannose oligosaccharides.

It is found in the membrane. Component of the asymmetric unit membrane (AUM); a highly specialized biomembrane elaborated by terminally differentiated urothelial cells. May play an important role in normal bladder epithelial physiology, possibly in regulating membrane permeability of superficial umbrella cells or in stabilizing the apical membrane through AUM/cytoskeletal interactions. This is Uroplakin-1b (Upk1b) from Rattus norvegicus (Rat).